A 210-amino-acid chain; its full sequence is ATP-dependent Clp protease proteolytic subunit (210 aa).

S107 functions as the Nucleophile in the catalytic mechanism. H132 is a catalytic residue.

Belongs to the peptidase S14 family. In terms of assembly, fourteen ClpP subunits assemble into 2 heptameric rings which stack back to back to give a disk-like structure with a central cavity, resembling the structure of eukaryotic proteasomes.

It is found in the cytoplasm. The catalysed reaction is Hydrolysis of proteins to small peptides in the presence of ATP and magnesium. alpha-casein is the usual test substrate. In the absence of ATP, only oligopeptides shorter than five residues are hydrolyzed (such as succinyl-Leu-Tyr-|-NHMec, and Leu-Tyr-Leu-|-Tyr-Trp, in which cleavage of the -Tyr-|-Leu- and -Tyr-|-Trp bonds also occurs).. In terms of biological role, cleaves peptides in various proteins in a process that requires ATP hydrolysis. Has a chymotrypsin-like activity. Plays a major role in the degradation of misfolded proteins. The chain is ATP-dependent Clp protease proteolytic subunit from Chromobacterium violaceum (strain ATCC 12472 / DSM 30191 / JCM 1249 / CCUG 213 / NBRC 12614 / NCIMB 9131 / NCTC 9757 / MK).